The chain runs to 311 residues: Putative ribose-phosphate pyrophosphokinase 2 (311 aa).

Residues 38-40 (DGE) and 97-98 (RQ) each bind ATP. Mg(2+) contacts are provided by His-131 and Asp-171. Asp-219 contacts D-ribose 5-phosphate.

Belongs to the ribose-phosphate pyrophosphokinase family. Class I subfamily. Homohexamer. It depends on Mg(2+) as a cofactor.

It is found in the cytoplasm. The catalysed reaction is D-ribose 5-phosphate + ATP = 5-phospho-alpha-D-ribose 1-diphosphate + AMP + H(+). It functions in the pathway metabolic intermediate biosynthesis; 5-phospho-alpha-D-ribose 1-diphosphate biosynthesis; 5-phospho-alpha-D-ribose 1-diphosphate from D-ribose 5-phosphate (route I): step 1/1. In terms of biological role, involved in the biosynthesis of the central metabolite phospho-alpha-D-ribosyl-1-pyrophosphate (PRPP) via the transfer of pyrophosphoryl group from ATP to 1-hydroxyl of ribose-5-phosphate (Rib-5-P). The sequence is that of Putative ribose-phosphate pyrophosphokinase 2 from Listeria innocua serovar 6a (strain ATCC BAA-680 / CLIP 11262).